Consider the following 242-residue polypeptide: MGWQRPDGRQPQELRSHQFQRHFTQFALGSVLAQAGQTQVLCTVSFKEGVPKFLEGTGQGWLTAEYRMLPSATRPRQEREFLKLSGRTQEIQRLIGRSLRSAVDLSLLGECTLIVDADVLQADAGTRSLAITGGYIALVDALSALLQQGVLRKSPLRHQVAAVSVGLIDDEPYLDLSYAEDVAASVDFNVVMTGSGQFIEVQGTAEMGSFDRGTLDRLLDVARQGIQELIEIQQRVLAPSHE.

Phosphate-binding positions include Arg87 and 125 to 127 (GTR).

Belongs to the RNase PH family. Homohexameric ring arranged as a trimer of dimers.

It carries out the reaction tRNA(n+1) + phosphate = tRNA(n) + a ribonucleoside 5'-diphosphate. In terms of biological role, phosphorolytic 3'-5' exoribonuclease that plays an important role in tRNA 3'-end maturation. Removes nucleotide residues following the 3'-CCA terminus of tRNAs; can also add nucleotides to the ends of RNA molecules by using nucleoside diphosphates as substrates, but this may not be physiologically important. Probably plays a role in initiation of 16S rRNA degradation (leading to ribosome degradation) during starvation. In Thermosynechococcus vestitus (strain NIES-2133 / IAM M-273 / BP-1), this protein is Ribonuclease PH.